A 651-amino-acid chain; its full sequence is MADYSTVPPPSSGSAGGGGGGVVNDAFKDALQRARQIAAKIGGDAGTSLNSNDYGYGGQKRPLEDGDQPDAKKVPPQNDSFGAQLPPMHQQQSRSVMTEEYKVPDGMVGFIIGRGGEQISRIQQESGCKIQIAPDSGGLPERSCMLTGTPESVQSAKRLLDQIVEKGRPAPGFHHGDGPGNAVQEIMIPASKAGLVIGKGGETIKQLQERAGVKMVMIQDGPQNTGADKPLRITGDPYKVQQAKEMVLELIRDQGGFREVRNEYGSRIGGNEGIDVPIPRFAVGIVIGRNGEMIKKIQNDAGVRIQFKPDDGTTPDRIAQITGPPDRCQHAAEIITDLLRSVQAGNPGGPGPGGRGRGRGQGNWNMGPPGGLQEFNFIVPTGKTGLIIGKGGETIKSISQQSGARIELQRSPPPNADPNMKLFTIRGTPQQIDYARQLIEEKIGGPVNPLGPPVPHGPHGVPGPHGPPGPPGPGTPMGPYNPAPYNPGPPGPAPHGPPAPYAPQGWGNAYPHWQQQAPPDPAKAGADPNSAAWAAYYAHYYQQQAQPPPAAPAGAPATTQTNGQGDQQAPAPAGQVDYTKAWEEYYKKMGQAVPAPAGAPPGGQPDYSAAWAEYYRQQAAYYAQTSPQGMPQHPPAPQGFANHARSHHHLY.

Disordered regions lie at residues 1-24 (MADY…GVVN) and 40-92 (KIGG…HQQQ). Ala-2 is modified (N-acetylalanine). Phosphoserine is present on residues Ser-48 and Ser-51. Residues 61 to 73 (RPLEDGDQPDAKK) are compositionally biased toward basic and acidic residues. KH domains are found at residues 96–160 (VMTE…KRLL), 181–247 (NAVQ…KEMV), and 271–335 (NEGI…AEII). Ser-136 is subject to Phosphoserine. At Thr-149 the chain carries Phosphothreonine. Omega-N-methylarginine is present on residues Arg-317, Arg-355, Arg-357, and Arg-359. The region spanning 372–439 (LQEFNFIVPT…QQIDYARQLI (68 aa)) is the KH 4 domain. The residue at position 411 (Ser-411) is a Phosphoserine. Thr-428 carries the phosphothreonine modification. Disordered regions lie at residues 443–528 (IGGP…GADP), 545–574 (AQPP…APAG), and 625–651 (TSPQ…HHLY). Residues 464–501 (PHGPPGPPGPGTPMGPYNPAPYNPGPPGPAPHGPPAPY) are compositionally biased toward pro residues. 2 stretches are compositionally biased toward low complexity: residues 514 to 528 (QQQA…GADP) and 552 to 574 (PAGA…APAG). Ser-626 carries the post-translational modification Phosphoserine.

Found in a complex with PUF60 and far upstream element (FUSE) DNA segment. Interacts with PUF60 and JTV1. Ubiquitinated. This targets the protein for proteasome-mediated degradation.

It is found in the nucleus. Regulates MYC expression by binding to a single-stranded far-upstream element (FUSE) upstream of the MYC promoter. May act both as activator and repressor of transcription. This is Far upstream element-binding protein 1 (Fubp1) from Mus musculus (Mouse).